The chain runs to 498 residues: ATP synthase subunit beta, chloroplastic (498 aa).

172-179 (GGAGVGKT) provides a ligand contact to ATP.

The protein belongs to the ATPase alpha/beta chains family. As to quaternary structure, F-type ATPases have 2 components, CF(1) - the catalytic core - and CF(0) - the membrane proton channel. CF(1) has five subunits: alpha(3), beta(3), gamma(1), delta(1), epsilon(1). CF(0) has four main subunits: a(1), b(1), b'(1) and c(9-12).

The protein resides in the plastid. It localises to the chloroplast thylakoid membrane. The catalysed reaction is ATP + H2O + 4 H(+)(in) = ADP + phosphate + 5 H(+)(out). In terms of biological role, produces ATP from ADP in the presence of a proton gradient across the membrane. The catalytic sites are hosted primarily by the beta subunits. The protein is ATP synthase subunit beta, chloroplastic of Gossypium hirsutum (Upland cotton).